The following is a 420-amino-acid chain: Carboxypeptidase A4 (420 aa).

The signal sequence occupies residues 1–16 (MKWLLFFGALIGAGIC). Residues 17–113 (GRDKFFGDQV…EMQHNEGIER (97 aa)) constitute a propeptide, activation peptide. Residues P69, V71, N118, Y122, H123, E126, and F162 each contribute to the a protein site. Positions 121 to 415 (AYHPLEAIYH…LGLKTIMEHV (295 aa)) constitute a Peptidase M14 domain. Residues H180 and E183 each coordinate Zn(2+). A disulfide bridge connects residues C249 and C272. Residue N259 is glycosylated (N-linked (GlcNAc...) asparagine). Residue H307 coordinates Zn(2+). Residue E381 is the Proton donor/acceptor of the active site.

The protein belongs to the peptidase M14 family. In terms of assembly, interacts with LXN. Zn(2+) serves as cofactor.

Its subcellular location is the secreted. Metalloprotease that cleaves hydrophobic C-terminal residues with a preference for -Phe, -Leu, -Ile, -Met, -Tyr and -Val. May function in peptide hormone and/or neuropeptide catabolism. This is Carboxypeptidase A4 (Cpa4) from Mus musculus (Mouse).